The sequence spans 516 residues: Pickpocket protein 11 (516 aa).

A run of 2 helical transmembrane segments spans residues 117–137 and 454–474; these read ILWW…VIMS and FIGT…VSVF.

It belongs to the amiloride-sensitive sodium channel (TC 1.A.6) family. Expressed in embryonic and larval tracheal systems in the dorsal trunk and transverse connective (TC), but not in the junction between the dorsal trunk and TC, and in several tracheal branches and terminal cells. In larvae, also expressed in ventral pits. Expressed in the taste-sensing terminal organ of the larval head. In adult, expressed in hairs on the tibia, femur, tarsi of the leg and wing margin.

It localises to the membrane. Part of a complex that plays a role in tracheal liquid clearance. In both larvae and adults, contributes to the behavioral response to salt. Probable role in sodium transport. This is Pickpocket protein 11 (ppk11) from Drosophila melanogaster (Fruit fly).